Reading from the N-terminus, the 79-residue chain is MNEIISNHTLDALGLRCPEPVMMVRKQIRHMQDGEVLLIIADDPATTRDIPSFCQFMDHTLLNSETESLPFKYWVKKGL.

Cys-17 functions as the Cysteine persulfide intermediate in the catalytic mechanism.

It belongs to the sulfur carrier protein TusA family.

It is found in the cytoplasm. In terms of biological role, sulfur carrier protein which probably makes part of a sulfur-relay system. This is Sulfur carrier protein TusA from Mannheimia succiniciproducens (strain KCTC 0769BP / MBEL55E).